A 37-amino-acid polypeptide reads, in one-letter code: Large ribosomal subunit protein bL36 (37 aa).

Belongs to the bacterial ribosomal protein bL36 family.

In Leptospira interrogans serogroup Icterohaemorrhagiae serovar Lai (strain 56601), this protein is Large ribosomal subunit protein bL36.